The chain runs to 286 residues: 2,3,4,5-tetrahydropyridine-2,6-dicarboxylate N-succinyltransferase (286 aa).

2 residues coordinate substrate: Arg109 and Asp146.

The protein belongs to the transferase hexapeptide repeat family. In terms of assembly, homotrimer.

The protein localises to the cytoplasm. The catalysed reaction is (S)-2,3,4,5-tetrahydrodipicolinate + succinyl-CoA + H2O = (S)-2-succinylamino-6-oxoheptanedioate + CoA. The protein operates within amino-acid biosynthesis; L-lysine biosynthesis via DAP pathway; LL-2,6-diaminopimelate from (S)-tetrahydrodipicolinate (succinylase route): step 1/3. The polypeptide is 2,3,4,5-tetrahydropyridine-2,6-dicarboxylate N-succinyltransferase (Bartonella tribocorum (strain CIP 105476 / IBS 506)).